The primary structure comprises 46 residues: Homeobox protein Hox-D4 (46 aa).

The segment at residues Val-1 to Thr-46 is a DNA-binding region (homeobox).

It belongs to the Antp homeobox family. Deformed subfamily. Forms a DNA-binding heterodimer with transcription factor PBX1.

It is found in the nucleus. Sequence-specific transcription factor which is part of a developmental regulatory system that provides cells with specific positional identities on the anterior-posterior axis. This Ovis aries (Sheep) protein is Homeobox protein Hox-D4 (HOXD4).